A 1259-amino-acid polypeptide reads, in one-letter code: Clustered mitochondria protein homolog (1259 aa).

A compositionally biased stretch (polar residues) spans 1–27; sequence MSQTNGNMEHSKETPQSQEVEQLTNGN. Residues 1–38 form a disordered region; sequence MSQTNGNMEHSKETPQSQEVEQLTNGNHPEEQQEEEEN. One can recognise a Clu domain in the interval 324–568; it reads DITRSQESYL…RVTPLDVMWQ (245 aa). Basic and acidic residues-rich tracts occupy residues 612–628 and 634–647; these read AEAE…SKEQ and TEEK…QERV. Disordered stretches follow at residues 612–647 and 881–908; these read AEAE…QERV and VVNG…PSRA. 3 TPR repeats span residues 982-1015, 1024-1057, and 1066-1099; these read AKLY…TERT, ILAY…WKII, and ITTM…CESL. Disordered stretches follow at residues 1192-1215 and 1229-1259; these read TKVQ…ANAS and EGGD…KSSA.

It belongs to the CLU family. In terms of assembly, may associate with the eukaryotic translation initiation factor 3 (eIF-3) complex.

The protein localises to the cytoplasm. MRNA-binding protein involved in proper cytoplasmic distribution of mitochondria. This is Clustered mitochondria protein homolog from Aspergillus clavatus (strain ATCC 1007 / CBS 513.65 / DSM 816 / NCTC 3887 / NRRL 1 / QM 1276 / 107).